Reading from the N-terminus, the 91-residue chain is MHNIPPEESLIEYPSDFPIKVMGKQHPEFAQTLTEVVLQFDPAFDPASVEMRPSKGGNYMGLTFTVRATSREQLDSLYRALHGHPMVSIVL.

The protein belongs to the UPF0250 family.

The polypeptide is UPF0250 protein BB0170 (Bordetella bronchiseptica (strain ATCC BAA-588 / NCTC 13252 / RB50) (Alcaligenes bronchisepticus)).